A 241-amino-acid chain; its full sequence is Homeobox protein TGIF2LX (241 aa).

Disordered regions lie at residues 1–56 (MEAA…PKGY) and 115–213 (RHGN…EYPD). Residues 21–39 (AKTQSPAQDTSTVSRNSAD) show a composition bias toward polar residues. Residues 48–111 (EHTKKPKGYL…INARRRILPD (64 aa)) constitute a DNA-binding region (homeobox; TALE-type).

The protein belongs to the TALE/TGIF homeobox family.

Its subcellular location is the nucleus. May have a transcription role in testis. The chain is Homeobox protein TGIF2LX (TGIF2LX) from Hylobates lar (Lar gibbon).